The chain runs to 845 residues: Synaptonemal complex protein 1 (845 aa).

Residues 59–215 (ETRQVYVDLN…YQLTEEKEAQ (157 aa)) are interaction with SYCE3. Coiled-coil stretches lie at residues 64-211 (YVDL…LTEE) and 244-544 (LRTE…EIEV). Positions 550–644 (EKLLGEVEKA…VSLKKQLEIE (95 aa)) are required for pH-induced assembly of C-terminal ends into antiparallel tetramers. The Nuclear localization signal signature appears at 553 to 556 (LGEV). Residues 620-663 (KTALETELSNIRNELVSLKKQLEIEREEKEKLKLEKENTAILKD) adopt a coiled-coil conformation. Residues 657-845 (NTAILKDKKD…RLKEAEKLFA (189 aa)) are DNA-binding. Serine 676 carries the post-translational modification Phosphoserine. Positions 684–703 (FDSKTTPSQNISRISSSMES) are enriched in polar residues. The interval 684-709 (FDSKTTPSQNISRISSSMESGKTKDN) is disordered. Residues 753 to 756 (KKRK) carry the Nuclear localization signal motif. The disordered stretch occupies residues 786 to 808 (LYNNNSPNSHLTPKQTPLSLSTP).

In terms of assembly, structural component of synaptonemal complexes. Homotetramer that consists of an N-terminal four-helical bundle that bifurcates into two elongated C-terminal dimeric coiled coils. This tetrameric building block potentially self-assembles into a supramolecular zipper-like lattice to mediate meiotic chromosome synapsis. Self-assembly is likely initiated by local proton density at chromosome axis, which is predicted to trigger antiparallel back to back assembly of adjacent C-terminal ends into tetrameric structures that anchor to chromosomal DNA. Then the N-terminal ends are predicted to undergo cooperative antiparallel head to head assembly at the midline of synaptonemal complexes central element to form a zipper-like lattice between properly aligned homologous chromosomes. The nascent synapsis generated by SYCP1 is stabilized through interaction with central element proteins SYCE1 and SYCE2. Interacts (via tetrameric core) with SYCE3; the interaction remodels SYCP1 homotetramers to 2:1 heterotrimers with SYCE3. SYCP1/SYCE3 heterotrimers form lattice assemblies as part of the mature synaptonemal complex via both lateral and head-to-head interactions. Forms a complex with EWSR1, PRDM9, SYCP3 and REC8; complex formation is dependent of phosphorylated form of REC8 and requires PRDM9 bound to hotspot DNA; EWSR1 joins PRDM9 with the chromosomal axis through REC8. Interacts with SPO16.

It localises to the nucleus. The protein localises to the chromosome. The protein resides in the centromere. Its function is as follows. Major component of the transverse filaments of synaptonemal complexes, formed between homologous chromosomes during meiotic prophase. Required for normal assembly of the central element of the synaptonemal complexes. Required for normal centromere pairing during meiosis. Required for normal meiotic chromosome synapsis during oocyte and spermatocyte development and for normal male and female fertility. This chain is Synaptonemal complex protein 1, found in Mesocricetus auratus (Golden hamster).